The primary structure comprises 346 residues: Very-long-chain 3-oxoacyl-CoA reductase (346 aa).

Residues 26–46 (TASVLLVAGGWFVVSRVWTFL) form a helical membrane-spanning segment. Residues isoleucine 71, aspartate 126, aspartate 134, asparagine 153, tyrosine 220, lysine 224, isoleucine 253, and serine 255 each contribute to the NADP(+) site. Tyrosine 220 (proton donor) is an active-site residue. Lysine 224 acts as the Lowers pKa of active site Tyr in catalysis.

The protein belongs to the short-chain dehydrogenases/reductases (SDR) family.

It is found in the endoplasmic reticulum membrane. The catalysed reaction is a very-long-chain (3R)-3-hydroxyacyl-CoA + NADP(+) = a very-long-chain 3-oxoacyl-CoA + NADPH + H(+). Its pathway is lipid metabolism; fatty acid biosynthesis. Functionally, component of the microsomal membrane bound fatty acid elongation system, which produces the 26-carbon very long-chain fatty acids (VLCFA) from palmitate. Catalyzes the reduction of the 3-ketoacyl-CoA intermediate that is formed in each cycle of fatty acid elongation. VLCFAs serve as precursors for ceramide and sphingolipids. This Emericella nidulans (strain FGSC A4 / ATCC 38163 / CBS 112.46 / NRRL 194 / M139) (Aspergillus nidulans) protein is Very-long-chain 3-oxoacyl-CoA reductase.